A 254-amino-acid chain; its full sequence is tRNA pseudouridine synthase A (254 aa).

D52 serves as the catalytic Nucleophile. Residue Y111 participates in substrate binding.

Belongs to the tRNA pseudouridine synthase TruA family. In terms of assembly, homodimer.

The enzyme catalyses uridine(38/39/40) in tRNA = pseudouridine(38/39/40) in tRNA. Its function is as follows. Formation of pseudouridine at positions 38, 39 and 40 in the anticodon stem and loop of transfer RNAs. The polypeptide is tRNA pseudouridine synthase A (Methylobacterium nodulans (strain LMG 21967 / CNCM I-2342 / ORS 2060)).